Here is a 126-residue protein sequence, read N- to C-terminus: Holo-[acyl-carrier-protein] synthase (126 aa).

2 residues coordinate Mg(2+): D9 and E58.

Belongs to the P-Pant transferase superfamily. AcpS family. Mg(2+) is required as a cofactor.

Its subcellular location is the cytoplasm. It catalyses the reaction apo-[ACP] + CoA = holo-[ACP] + adenosine 3',5'-bisphosphate + H(+). Transfers the 4'-phosphopantetheine moiety from coenzyme A to a Ser of acyl-carrier-protein. This is Holo-[acyl-carrier-protein] synthase from Vibrio vulnificus (strain CMCP6).